An 822-amino-acid polypeptide reads, in one-letter code: Serine/threonine-protein phosphatase 4 regulatory subunit 3 (822 aa).

The region spanning 1-100 (MTDTRRRVKV…DEIWEKICQV (100 aa)) is the WH1 domain. The disordered stretch occupies residues 744–822 (TSQLSASGHP…PLTKKARLGS (79 aa)). Low complexity predominate over residues 761 to 774 (SPGSPESPGSVSKS). Acidic residues predominate over residues 793-808 (YPDDDEEDDDNDEEEK).

The protein belongs to the SMEK family. Serine/threonine-protein phosphatase 4 (PP4) occurs in different assemblies of the catalytic and one or more regulatory subunits.

Regulatory subunit of serine/threonine-protein phosphatase 4. This is Serine/threonine-protein phosphatase 4 regulatory subunit 3 (smek1) from Xenopus laevis (African clawed frog).